Here is a 513-residue protein sequence, read N- to C-terminus: Bifunctional purine biosynthesis protein PurH (513 aa).

The MGS-like domain maps to 1–145; it reads MTKKAIISVY…KNFKYITVII (145 aa).

This sequence belongs to the PurH family.

The enzyme catalyses (6R)-10-formyltetrahydrofolate + 5-amino-1-(5-phospho-beta-D-ribosyl)imidazole-4-carboxamide = 5-formamido-1-(5-phospho-D-ribosyl)imidazole-4-carboxamide + (6S)-5,6,7,8-tetrahydrofolate. It carries out the reaction IMP + H2O = 5-formamido-1-(5-phospho-D-ribosyl)imidazole-4-carboxamide. It functions in the pathway purine metabolism; IMP biosynthesis via de novo pathway; 5-formamido-1-(5-phospho-D-ribosyl)imidazole-4-carboxamide from 5-amino-1-(5-phospho-D-ribosyl)imidazole-4-carboxamide (10-formyl THF route): step 1/1. The protein operates within purine metabolism; IMP biosynthesis via de novo pathway; IMP from 5-formamido-1-(5-phospho-D-ribosyl)imidazole-4-carboxamide: step 1/1. The sequence is that of Bifunctional purine biosynthesis protein PurH from Caldicellulosiruptor saccharolyticus (strain ATCC 43494 / DSM 8903 / Tp8T 6331).